The chain runs to 259 residues: Submandibular glandular kallikrein-9 (259 aa).

An N-terminal signal peptide occupies residues 1–18 (MWFLILFLALSLGQIDAA). Residues 19–24 (PPGQSR) constitute a propeptide, activation peptide. The region spanning 25-256 (VVGGYNCETN…FTSWIKKVMK (232 aa)) is the Peptidase S1 domain. Intrachain disulfides connect Cys-31–Cys-171, Cys-48–Cys-64, Cys-150–Cys-217, Cys-182–Cys-196, and Cys-207–Cys-232. Residue His-63 is the Charge relay system of the active site. Residue Asn-106 is glycosylated (N-linked (GlcNAc...) asparagine). Asp-118 (charge relay system) is an active-site residue. The Charge relay system role is filled by Ser-211.

The protein belongs to the peptidase S1 family. Kallikrein subfamily. In terms of assembly, heterodimer of a light chain and heavy chain linked by a disulfide bond.

It catalyses the reaction Preferential cleavage of Arg-|-Xaa bonds in small molecule substrates. Highly selective action to release kallidin (lysyl-bradykinin) from kininogen involves hydrolysis of Met-|-Xaa or Leu-|-Xaa.. Functionally, glandular kallikreins cleave Met-Lys and Arg-Ser bonds in kininogen to release Lys-bradykinin. This enzyme has a vasoconstrictor activity. KLK-9 has both a chymotrypsin-like and a trypsin-like properties. The polypeptide is Submandibular glandular kallikrein-9 (Klk9) (Rattus norvegicus (Rat)).